The following is a 142-amino-acid chain: Large ribosomal subunit protein uL13 (142 aa).

The protein belongs to the universal ribosomal protein uL13 family. As to quaternary structure, part of the 50S ribosomal subunit.

Functionally, this protein is one of the early assembly proteins of the 50S ribosomal subunit, although it is not seen to bind rRNA by itself. It is important during the early stages of 50S assembly. This chain is Large ribosomal subunit protein uL13, found in Helicobacter hepaticus (strain ATCC 51449 / 3B1).